Consider the following 151-residue polypeptide: Hemoglobin-2 (151 aa).

Thr-2 bears the N-acetylthreonine mark. Residues 3-148 (TLTNPQKAAI…ICKTLGDYMK (146 aa)) enclose the Globin domain. Heme b is bound at residue His-97.

Belongs to the globin family. As to quaternary structure, homotetramer.

The protein localises to the cytoplasm. The polypeptide is Hemoglobin-2 (Phacoides pectinatus (Thick lucine)).